Here is a 120-residue protein sequence, read N- to C-terminus: Large ribosomal subunit protein uL18 (120 aa).

The segment covering Met-1–Leu-20 has biased composition (basic residues). The segment at Met-1 to Arg-26 is disordered.

This sequence belongs to the universal ribosomal protein uL18 family. As to quaternary structure, part of the 50S ribosomal subunit; part of the 5S rRNA/L5/L18/L25 subcomplex. Contacts the 5S and 23S rRNAs.

Its function is as follows. This is one of the proteins that bind and probably mediate the attachment of the 5S RNA into the large ribosomal subunit, where it forms part of the central protuberance. The polypeptide is Large ribosomal subunit protein uL18 (Synechocystis sp. (strain ATCC 27184 / PCC 6803 / Kazusa)).